The following is a 165-amino-acid chain: Pro-MCH (165 aa).

Positions 1–21 (MAKMNLSSYILILTFSLFSQG) are cleaved as a signal peptide. Isoleucine amide is present on isoleucine 143. An intrachain disulfide couples cysteine 153 to cysteine 162.

It belongs to the melanin-concentrating hormone family. In terms of processing, differentially processed in the brain and in peripheral organs producing two neuropeptides; NEI and MCH. A third peptide, NGE, may also be produced. Preferential processing in neurons by prohormone convertase 2 (PC2) generates NEI. MCH is generated in neurons of the lateral hypothalmic area by several prohormone convertases including PC1/3, PC2 and PC5/6. In terms of tissue distribution, predominantly expressed in lateral hypothalamus, also detected in pallidum, neocortex and cerebellum. Also found in thymus, brown adipose tissue, duodenum and testis (spermatogonia, early spermatocytes and Sertoli cells). No expression in peripheral blood. In brain exclusively mature MCH and NEI peptides are present. In peripheral tissues a large product, encompassing the NEI and MCH domains of the precursor, is found predominantly.

It is found in the secreted. Its function is as follows. MCH may act as a neurotransmitter or neuromodulator in a broad array of neuronal functions directed toward the regulation of goal-directed behavior, such as food intake, and general arousal. May also have a role in spermatocyte differentiation. The polypeptide is Pro-MCH (PMCH) (Homo sapiens (Human)).